The primary structure comprises 335 residues: Nucleotide-binding protein CYA_0911 (335 aa).

20–27 is a binding site for ATP; the sequence is GLTGSGKT. The disordered stretch occupies residues 306–335; the sequence is ARFGPPPPAAGVEQQQVRIPLAGVPAPPHD.

It belongs to the RapZ-like family.

Its function is as follows. Displays ATPase and GTPase activities. The chain is Nucleotide-binding protein CYA_0911 from Synechococcus sp. (strain JA-3-3Ab) (Cyanobacteria bacterium Yellowstone A-Prime).